The chain runs to 288 residues: Protein sprouty homolog 3 (288 aa).

The 114-residue stretch at 154 to 267 folds into the SPR domain; the sequence is KCVPCTAVRP…PGCRCKRHTN (114 aa).

It belongs to the sprouty family. As to quaternary structure, interacts with TESK1. Interacts with USP11. Interacts with CAV1 (via C-terminus). In terms of tissue distribution, expressed in the brain with expression the highest in Purkinje cell bodies and projections in the cerebellum (at protein level). Also expressed in central and peripheral nervous system ganglion cells, superior cervical ganglion and dorsal root ganglion (at protein level). Expressed in the retinal ganglion cell layer and the inner nuclear layer (at protein level).

It localises to the cytoplasm. In terms of biological role, inhibits neurite branching, arbor length and neurite complexity. Inhibits EGF-mediated p42/44 ERK signaling. Negatively regulates the MAPK cascade, resulting in a reduction of extracellular matrix protein accumulation. May function as an antagonist of fibroblast growth factor (FGF) pathways and may negatively modulate respiratory organogenesis. The protein is Protein sprouty homolog 3 of Mus musculus (Mouse).